The sequence spans 189 residues: UPF0301 protein PFL_5830 (189 aa).

The protein belongs to the UPF0301 (AlgH) family.

In Pseudomonas fluorescens (strain ATCC BAA-477 / NRRL B-23932 / Pf-5), this protein is UPF0301 protein PFL_5830.